We begin with the raw amino-acid sequence, 114 residues long: Fatty acid-binding protein, liver (114 aa).

It belongs to the calycin superfamily. Fatty-acid binding protein (FABP) family. The N-terminus is blocked.

It localises to the cytoplasm. FABPs are thought to play a role in the intracellular transport of long-chain fatty acids and their acyl-CoA esters. This chain is Fatty acid-binding protein, liver, found in Lethenteron camtschaticum (Japanese lamprey).